Here is a 428-residue protein sequence, read N- to C-terminus: UPF0597 protein BF3772 (428 aa).

This sequence belongs to the UPF0597 family.

This Bacteroides fragilis (strain YCH46) protein is UPF0597 protein BF3772.